A 366-amino-acid chain; its full sequence is Peptide chain release factor 2 (366 aa).

At Gln-253 the chain carries N5-methylglutamine.

The protein belongs to the prokaryotic/mitochondrial release factor family. Methylated by PrmC. Methylation increases the termination efficiency of RF2.

It is found in the cytoplasm. Peptide chain release factor 2 directs the termination of translation in response to the peptide chain termination codons UGA and UAA. In Buchnera aphidicola subsp. Baizongia pistaciae (strain Bp), this protein is Peptide chain release factor 2 (prfB).